The sequence spans 133 residues: Ribosome-binding factor A (133 aa).

Belongs to the RbfA family. In terms of assembly, monomer. Binds 30S ribosomal subunits, but not 50S ribosomal subunits or 70S ribosomes.

It localises to the cytoplasm. In terms of biological role, one of several proteins that assist in the late maturation steps of the functional core of the 30S ribosomal subunit. Associates with free 30S ribosomal subunits (but not with 30S subunits that are part of 70S ribosomes or polysomes). Required for efficient processing of 16S rRNA. May interact with the 5'-terminal helix region of 16S rRNA. The sequence is that of Ribosome-binding factor A from Acinetobacter baumannii (strain AB307-0294).